Here is a 397-residue protein sequence, read N- to C-terminus: Imidazolonepropionase (397 aa).

The Fe(3+) site is built by H66 and H68. The Zn(2+) site is built by H66 and H68. R75, Y138, and H171 together coordinate 4-imidazolone-5-propanoate. An N-formimidoyl-L-glutamate-binding site is contributed by Y138. Position 236 (H236) interacts with Fe(3+). H236 serves as a coordination point for Zn(2+). Residue Q239 participates in 4-imidazolone-5-propanoate binding. Fe(3+) is bound at residue D311. D311 serves as a coordination point for Zn(2+). N-formimidoyl-L-glutamate-binding residues include N313 and G315. 4-imidazolone-5-propanoate is bound at residue S316.

This sequence belongs to the metallo-dependent hydrolases superfamily. HutI family. Zn(2+) is required as a cofactor. Fe(3+) serves as cofactor.

The protein localises to the cytoplasm. The catalysed reaction is 4-imidazolone-5-propanoate + H2O = N-formimidoyl-L-glutamate. Its pathway is amino-acid degradation; L-histidine degradation into L-glutamate; N-formimidoyl-L-glutamate from L-histidine: step 3/3. Catalyzes the hydrolytic cleavage of the carbon-nitrogen bond in imidazolone-5-propanoate to yield N-formimidoyl-L-glutamate. It is the third step in the universal histidine degradation pathway. The sequence is that of Imidazolonepropionase from Roseobacter denitrificans (strain ATCC 33942 / OCh 114) (Erythrobacter sp. (strain OCh 114)).